Reading from the N-terminus, the 68-residue chain is UPF0435 protein SAOUHSC_02093 (68 aa).

Belongs to the UPF0435 family.

The chain is UPF0435 protein SAOUHSC_02093 from Staphylococcus aureus (strain NCTC 8325 / PS 47).